Consider the following 165-residue polypeptide: Nucleotide-binding protein Cagg_1607 (165 aa).

This sequence belongs to the YajQ family.

Functionally, nucleotide-binding protein. The sequence is that of Nucleotide-binding protein Cagg_1607 from Chloroflexus aggregans (strain MD-66 / DSM 9485).